Reading from the N-terminus, the 205-residue chain is Glycerol-3-phosphate acyltransferase (205 aa).

The Periplasmic segment spans residues 1–3 (MSA). Residues 4 to 24 (IAPGMILFAYLCGSISSAILV) traverse the membrane as a helical segment. The Cytoplasmic portion of the chain corresponds to 25-52 (CRLCGLPDPRTSGSGNPGATNVLRMGGK). Residues 53-73 (GAALAVLIFDVLKGMLPVWGA) form a helical membrane-spanning segment. Topologically, residues 74–80 (YELGVSP) are periplasmic. A helical transmembrane segment spans residues 81-101 (FWLGLIAIAACLGHIWPIFFG). Topologically, residues 102–111 (FKGGKGVATA) are cytoplasmic. A helical membrane pass occupies residues 112–132 (FGAIAPIGWDLTGVMAGTWLL). Over 133 to 137 (TVLLS) the chain is Periplasmic. The chain crosses the membrane as a helical span at residues 138 to 158 (GYSSLGAIVSALIAPFYVWWF). Over 159–205 (KPQFTFPVSMLSCLILLRHHDNIQRLWRRQETKIWTKLKRKREKDPE) the chain is Cytoplasmic.

The protein belongs to the PlsY family. Probably interacts with PlsX.

It is found in the cell inner membrane. It catalyses the reaction sn-glycerol 3-phosphate + an acyl-CoA = a 1-acyl-sn-glycero-3-phosphate + CoA. It carries out the reaction a fatty acyl-[ACP] + sn-glycerol 3-phosphate = a 1-acyl-sn-glycero-3-phosphate + holo-[ACP]. It participates in lipid metabolism; phospholipid metabolism. In terms of biological role, catalyzes the transfer of an acyl group from acyl-ACP to glycerol-3-phosphate (G3P) to form lysophosphatidic acid (LPA). This enzyme can also utilize acyl-CoA as fatty acyl donor, but not acyl-PO(4). In Escherichia fergusonii (strain ATCC 35469 / DSM 13698 / CCUG 18766 / IAM 14443 / JCM 21226 / LMG 7866 / NBRC 102419 / NCTC 12128 / CDC 0568-73), this protein is Glycerol-3-phosphate acyltransferase.